A 322-amino-acid chain; its full sequence is Cyclin mcs2 (322 aa).

Ser310 bears the Phosphoserine mark.

Belongs to the cyclin family. Cyclin C subfamily. As to quaternary structure, one of the nine subunits forming the core-TFIIH basal transcription factor. Interacts with crk1 and skp1.

The protein resides in the nucleus. In terms of biological role, essential for progression through the cell cycle. Possesses kinase activity that can be detected when myelin basic protein (MBP) is provided as an exogenous substrate. The chain is Cyclin mcs2 (mcs2) from Schizosaccharomyces pombe (strain 972 / ATCC 24843) (Fission yeast).